The following is a 452-amino-acid chain: Glutamate--tRNA ligase 2 (452 aa).

The 'HIGH' region motif lies at 8 to 18; the sequence is PSPTGRLHVGN. The 'KMSKS' region motif lies at 246–250; sequence KLSKR. Residue lysine 249 coordinates ATP.

The protein belongs to the class-I aminoacyl-tRNA synthetase family. Glutamate--tRNA ligase type 1 subfamily. Monomer.

It is found in the cytoplasm. The enzyme catalyses tRNA(Glu) + L-glutamate + ATP = L-glutamyl-tRNA(Glu) + AMP + diphosphate. Catalyzes the attachment of glutamate to tRNA(Glu) in a two-step reaction: glutamate is first activated by ATP to form Glu-AMP and then transferred to the acceptor end of tRNA(Glu). The chain is Glutamate--tRNA ligase 2 from Erythrobacter litoralis (strain HTCC2594).